The sequence spans 41 residues: Alpha-conotoxin CIB (41 aa).

Residues 1–21 (SDGRNEAANDEASDVIELALK) constitute a propeptide that is removed on maturation. 2 disulfide bridges follow: Cys23–Cys29 and Cys24–Cys37. Positions 25 to 27 (SNP) are ser-Xaa-Pro motif, crucial for potent interaction with nAChR. A Cysteine amide modification is found at Cys37.

Belongs to the conotoxin A superfamily. In terms of tissue distribution, expressed by the venom duct.

It localises to the secreted. In terms of biological role, alpha-conotoxins act on postsynaptic membranes, they bind to the nicotinic acetylcholine receptors (nAChR) and thus inhibit them. This toxin blocks rat neuronal nAChR alpha-3-beta-2/CHRNA3-CHRNB2 (IC(50)=128.9 nM) and alpha-7/CHRNA7 (IC(50)=1511 nM). In vivo, intramuscular injection into zebrafish does not produce any effect on the locomotion of zebrafish. This chain is Alpha-conotoxin CIB, found in Conus catus (Cat cone).